Consider the following 584-residue polypeptide: 2-succinyl-5-enolpyruvyl-6-hydroxy-3-cyclohexene-1-carboxylate synthase (584 aa).

The protein belongs to the TPP enzyme family. MenD subfamily. In terms of assembly, homodimer. The cofactor is Mg(2+). Mn(2+) is required as a cofactor. Thiamine diphosphate serves as cofactor.

It catalyses the reaction isochorismate + 2-oxoglutarate + H(+) = 5-enolpyruvoyl-6-hydroxy-2-succinyl-cyclohex-3-ene-1-carboxylate + CO2. The protein operates within quinol/quinone metabolism; 1,4-dihydroxy-2-naphthoate biosynthesis; 1,4-dihydroxy-2-naphthoate from chorismate: step 2/7. Its pathway is quinol/quinone metabolism; menaquinone biosynthesis. Catalyzes the thiamine diphosphate-dependent decarboxylation of 2-oxoglutarate and the subsequent addition of the resulting succinic semialdehyde-thiamine pyrophosphate anion to isochorismate to yield 2-succinyl-5-enolpyruvyl-6-hydroxy-3-cyclohexene-1-carboxylate (SEPHCHC). This is 2-succinyl-5-enolpyruvyl-6-hydroxy-3-cyclohexene-1-carboxylate synthase from Bacillus cereus (strain ATCC 14579 / DSM 31 / CCUG 7414 / JCM 2152 / NBRC 15305 / NCIMB 9373 / NCTC 2599 / NRRL B-3711).